We begin with the raw amino-acid sequence, 606 residues long: Methionine--tRNA ligase (606 aa).

The short motif at 14–24 (PYANGPRHIGH) is the 'HIGH' region element. Cys-146, Cys-149, Cys-159, and Cys-162 together coordinate Zn(2+). The 'KMSKS' region signature appears at 351-355 (KFSSS). Ser-354 contacts ATP.

It belongs to the class-I aminoacyl-tRNA synthetase family. MetG type 1 subfamily. As to quaternary structure, monomer. It depends on Zn(2+) as a cofactor.

It localises to the cytoplasm. The enzyme catalyses tRNA(Met) + L-methionine + ATP = L-methionyl-tRNA(Met) + AMP + diphosphate. Functionally, is required not only for elongation of protein synthesis but also for the initiation of all mRNA translation through initiator tRNA(fMet) aminoacylation. This Thermobifida fusca (strain YX) protein is Methionine--tRNA ligase.